The sequence spans 526 residues: CTP synthase (526 aa).

The amidoligase domain stretch occupies residues 1–264 (MPQRFIVVTG…HKLIAKELDI (264 aa)). Serine 14 lines the CTP pocket. Serine 14 contributes to the UTP binding site. ATP-binding positions include 15 to 20 (GIGKGI) and aspartate 72. Aspartate 72 and glutamate 138 together coordinate Mg(2+). Residues 145-147 (DIE), 185-190 (KTKPTQ), and lysine 221 contribute to the CTP site. UTP-binding positions include 185 to 190 (KTKPTQ) and lysine 221. Positions 282 to 526 (KIGIVGKYLG…VKAAGGKIND (245 aa)) constitute a Glutamine amidotransferase type-1 domain. Residue glycine 342 coordinates L-glutamine. The Nucleophile; for glutamine hydrolysis role is filled by cysteine 369. Residues 370-373 (LGMQ), glutamate 393, and arginine 451 each bind L-glutamine. Residues histidine 499 and glutamate 501 contribute to the active site.

The protein belongs to the CTP synthase family. Homotetramer.

It catalyses the reaction UTP + L-glutamine + ATP + H2O = CTP + L-glutamate + ADP + phosphate + 2 H(+). The enzyme catalyses L-glutamine + H2O = L-glutamate + NH4(+). It carries out the reaction UTP + NH4(+) + ATP = CTP + ADP + phosphate + 2 H(+). The protein operates within pyrimidine metabolism; CTP biosynthesis via de novo pathway; CTP from UDP: step 2/2. Allosterically activated by GTP, when glutamine is the substrate; GTP has no effect on the reaction when ammonia is the substrate. The allosteric effector GTP functions by stabilizing the protein conformation that binds the tetrahedral intermediate(s) formed during glutamine hydrolysis. Inhibited by the product CTP, via allosteric rather than competitive inhibition. Functionally, catalyzes the ATP-dependent amination of UTP to CTP with either L-glutamine or ammonia as the source of nitrogen. Regulates intracellular CTP levels through interactions with the four ribonucleotide triphosphates. The sequence is that of CTP synthase from Thermosipho africanus (strain TCF52B).